A 431-amino-acid chain; its full sequence is Beta-lactamase hydrolase-like protein (431 aa).

Zn(2+) contacts are provided by histidine 212, histidine 214, and histidine 286. Residue aspartate 309 participates in substrate binding.

It belongs to the metallo-beta-lactamase superfamily. Zn(2+) serves as cofactor.

Its function is as follows. Could play a role in cell adherence or biofilm development. This chain is Beta-lactamase hydrolase-like protein, found in Xylella fastidiosa (strain Temecula1 / ATCC 700964).